Here is a 20-residue protein sequence, read N- to C-terminus: Protein C activator (20 aa).

Residues V1–A20 enclose the Peptidase S1 domain.

It belongs to the peptidase S1 family. Snake venom subfamily. As to quaternary structure, monomer. Glycosylated. As to expression, expressed by the venom gland.

The protein localises to the secreted. Its activity is regulated as follows. Inhibited by calcium. In terms of biological role, snake venom serine protease that selectively cleaves the heavy chain of protein C (PROC). This activation is thrombomodulin-independent. The protein is Protein C activator of Agkistrodon bilineatus (Cantil).